A 239-amino-acid polypeptide reads, in one-letter code: Prolyl hydroxylase EGLN3 (239 aa).

The tract at residues 62 to 73 (AGPRAGVSKRHL) is beta(2)beta(3) 'finger-like' loop. The tract at residues 88 to 104 (CEAINFLLSLIDRLVLY) is required for interaction with ADRB2. Positions 116-214 (ERSKAMVACY…RYAMTVWYFD (99 aa)) constitute a Fe2OG dioxygenase domain. Fe cation contacts are provided by His135, Asp137, and His196. Position 205 (Arg205) interacts with 2-oxoglutarate.

As to quaternary structure, interacts with ADRB2; the interaction hydroxylates ADRB2 facilitating its ubiquitination by the VHL-E3 ligase complex. Interacts with PKM; the interaction hydroxylates PKM in hypoxia. Interacts with WDR83; the interaction leads to almost complete elimination of HIF-mediated reporter activity. Interacts with BCL2 (via its BH4 domain); the interaction disrupts the BAX-BCL4 complex inhibiting the anti-apoptotic activity of BCL2. Interacts with LIMD1, WTIP and AJUBA. Fe(2+) serves as cofactor. Requires L-ascorbate as cofactor. Ubiquitinated by SIAH1 and/or SIAH2 in response to the unfolded protein response (UPR), leading to its degradation. As to expression, highly expressed in cardiac and smooth muscle. Also high expression in brain, skeletal muscle and kidney. Low levels in lung.

Its subcellular location is the nucleus. The protein localises to the cytoplasm. The enzyme catalyses L-prolyl-[protein] + 2-oxoglutarate + O2 = trans-4-hydroxy-L-prolyl-[protein] + succinate + CO2. The catalysed reaction is L-prolyl-[hypoxia-inducible factor alpha subunit] + 2-oxoglutarate + O2 = trans-4-hydroxy-L-prolyl-[hypoxia-inducible factor alpha subunit] + succinate + CO2. Functionally, prolyl hydroxylase that mediates hydroxylation of proline residues in target proteins, such as PKM, TELO2, ATF4 and HIF1A. Target proteins are preferentially recognized via a LXXLAP motif. Cellular oxygen sensor that catalyzes, under normoxic conditions, the post-translational formation of 4-hydroxyproline in hypoxia-inducible factor (HIF) alpha proteins. Hydroxylates a specific proline found in each of the oxygen-dependent degradation (ODD) domains (N-terminal, NODD, and C-terminal, CODD) of HIF1A. Also hydroxylates HIF2A. Has a preference for the CODD site for both HIF1A and HIF2A. Hydroxylation on the NODD site by EGLN3 appears to require prior hydroxylation on the CODD site. Hydroxylated HIFs are then targeted for proteasomal degradation via the von Hippel-Lindau ubiquitination complex. Under hypoxic conditions, the hydroxylation reaction is attenuated allowing HIFs to escape degradation resulting in their translocation to the nucleus, heterodimerization with HIF1B, and increased expression of hypoxy-inducible genes. ELGN3 is the most important isozyme in limiting physiological activation of HIFs (particularly HIF2A) in hypoxia. Also hydroxylates PKM in hypoxia, limiting glycolysis. Under normoxia, hydroxylates and regulates the stability of ADRB2. Regulator of cardiomyocyte and neuronal apoptosis. In cardiomyocytes, inhibits the anti-apoptotic effect of BCL2 by disrupting the BAX-BCL2 complex. In neurons, has a NGF-induced proapoptotic effect, probably through regulating CASP3 activity. Also essential for hypoxic regulation of neutrophilic inflammation. Plays a crucial role in DNA damage response (DDR) by hydroxylating TELO2, promoting its interaction with ATR which is required for activation of the ATR/CHK1/p53 pathway. Also mediates hydroxylation of ATF4, leading to decreased protein stability of ATF4. In Mus musculus (Mouse), this protein is Prolyl hydroxylase EGLN3.